The primary structure comprises 309 residues: MAEFGISPGQLVAVFCDKSSSEEALKKLVGRVQGLTGSEGQVFVENITQLLQSAHKESSFDVILSGIVPGSTSLHSPEALADMARILRPGGCLFLKEPVETTGVNNDKIKTASKLCSALTLSGLVEIKELQREALSPEEAQSMQEHLGYHSDSLLSVHVTGKKPNFEVGSSSQLKLLHKKSSSVKPVVDPATAKLWTLSANDMEDDSMDLIDSDELLDPEDLKKPDPASLKAPSCGEGKKRKACKNCTCGLAEELEKEQSKAQSSQPKSACGNCYLGDAFRCANCPYLGMPAFKPGEQVLLSSSNLQDA.

The interval 6-172 (ISPGQLVAVF…KPNFEVGSSS (167 aa)) is N-terminal SAM-like domain. Positions 173–222 (QLKLLHKKSSSVKPVVDPATAKLWTLSANDMEDDSMDLIDSDELLDPEDL) are linker. Phosphoserine occurs at positions 182, 183, and 213. Residues Cys-235, Cys-244, Cys-247, and Cys-249 each contribute to the [2Fe-2S] cluster site. Residues 235-249 (CGEGKKRKACKNCTC) form a fe-S binding site A region. Ser-269 is modified (phosphoserine). 4 residues coordinate [4Fe-4S] cluster: Cys-271, Cys-274, Cys-282, and Cys-285. 2 short sequence motifs (cx2C motif) span residues 271-274 (CGNC) and 282-285 (CANC). The fe-S binding site B stretch occupies residues 271 to 285 (CGNCYLGDAFRCANC). Ser-302 and Ser-304 each carry phosphoserine.

The protein belongs to the anamorsin family. Monomer. Interacts with NDOR1. Interacts with CHCHD4. The cofactor is [2Fe-2S] cluster. [4Fe-4S] cluster serves as cofactor.

It localises to the cytoplasm. The protein localises to the nucleus. The protein resides in the mitochondrion intermembrane space. Functionally, component of the cytosolic iron-sulfur (Fe-S) protein assembly (CIA) machinery required for the maturation of extramitochondrial Fe-S proteins. Part of an electron transfer chain functioning in an early step of cytosolic Fe-S biogenesis, facilitating the de novo assembly of a [4Fe-4S] cluster on the scaffold complex NUBP1-NUBP2. Electrons are transferred to CIAPIN1 from NADPH via the FAD- and FMN-containing protein NDOR1. NDOR1-CIAPIN1 are also required for the assembly of the diferric tyrosyl radical cofactor of ribonucleotide reductase (RNR), probably by providing electrons for reduction during radical cofactor maturation in the catalytic small subunit. Has anti-apoptotic effects in the cell. Involved in negative control of cell death upon cytokine withdrawal. Promotes development of hematopoietic cells. The protein is Anamorsin of Rattus norvegicus (Rat).